Here is a 138-residue protein sequence, read N- to C-terminus: Small ribosomal subunit protein uS11c (138 aa).

The interval 1-23 (MAKPIQRIGSRRNGPIGSRKNGR) is disordered.

This sequence belongs to the universal ribosomal protein uS11 family. Part of the 30S ribosomal subunit.

Its subcellular location is the plastid. It localises to the chloroplast. The polypeptide is Small ribosomal subunit protein uS11c (Platanus occidentalis (Sycamore)).